A 449-amino-acid polypeptide reads, in one-letter code: GTPase Der (449 aa).

2 EngA-type G domains span residues 3–167 (SIVA…PDEP) and 175–350 (TNIA…EQYS). GTP is bound by residues 9–16 (GRPNVGKS), 56–60 (DTGGF), 119–122 (NKVD), 181–188 (GRPNVGKS), 228–232 (DTAGI), and 293–296 (NKWD). The 85-residue stretch at 351 to 435 (RRVTTSELNR…PFRLLFRGRE (85 aa)) folds into the KH-like domain.

Belongs to the TRAFAC class TrmE-Era-EngA-EngB-Septin-like GTPase superfamily. EngA (Der) GTPase family. As to quaternary structure, associates with the 50S ribosomal subunit.

Functionally, GTPase that plays an essential role in the late steps of ribosome biogenesis. This Trichlorobacter lovleyi (strain ATCC BAA-1151 / DSM 17278 / SZ) (Geobacter lovleyi) protein is GTPase Der.